Here is a 364-residue protein sequence, read N- to C-terminus: UDP-N-acetylglucosamine--N-acetylmuramyl-(pentapeptide) pyrophosphoryl-undecaprenol N-acetylglucosamine transferase 1 (364 aa).

UDP-N-acetyl-alpha-D-glucosamine contacts are provided by residues 10–12 (TGG), Asn124, Ser195, Ile250, and Gln295.

It belongs to the glycosyltransferase 28 family. MurG subfamily.

It is found in the cell membrane. It catalyses the reaction di-trans,octa-cis-undecaprenyl diphospho-N-acetyl-alpha-D-muramoyl-L-alanyl-D-glutamyl-meso-2,6-diaminopimeloyl-D-alanyl-D-alanine + UDP-N-acetyl-alpha-D-glucosamine = di-trans,octa-cis-undecaprenyl diphospho-[N-acetyl-alpha-D-glucosaminyl-(1-&gt;4)]-N-acetyl-alpha-D-muramoyl-L-alanyl-D-glutamyl-meso-2,6-diaminopimeloyl-D-alanyl-D-alanine + UDP + H(+). It functions in the pathway cell wall biogenesis; peptidoglycan biosynthesis. Its function is as follows. Cell wall formation. Catalyzes the transfer of a GlcNAc subunit on undecaprenyl-pyrophosphoryl-MurNAc-pentapeptide (lipid intermediate I) to form undecaprenyl-pyrophosphoryl-MurNAc-(pentapeptide)GlcNAc (lipid intermediate II). The protein is UDP-N-acetylglucosamine--N-acetylmuramyl-(pentapeptide) pyrophosphoryl-undecaprenol N-acetylglucosamine transferase 1 of Bacillus cereus (strain ATCC 14579 / DSM 31 / CCUG 7414 / JCM 2152 / NBRC 15305 / NCIMB 9373 / NCTC 2599 / NRRL B-3711).